The sequence spans 522 residues: Poly(A) polymerase (522 aa).

Residues 63–65 (YGS), 76–78 (DID), D130, K193, Y202, and 211–212 (GI) contribute to the ATP site. Residues D76, D78, and D130 each contribute to the Mg(2+) site. The disordered stretch occupies residues 475 to 522 (QLKAKEENSIPNEEKKEQLKKEMKQEANTIVKNSSTDDDFMKRFTRKN). Over residues 476–499 (LKAKEENSIPNEEKKEQLKKEMKQ) the composition is skewed to basic and acidic residues.

This sequence belongs to the poly(A) polymerase family. It depends on Mg(2+) as a cofactor. The cofactor is Mn(2+).

It is found in the cytoplasm. The protein localises to the nucleus. The enzyme catalyses RNA(n) + ATP = RNA(n)-3'-adenine ribonucleotide + diphosphate. Its function is as follows. Polymerase that creates the 3'-poly(A) tail of mRNA's. May acquire specificity through interaction with a cleavage and polyadenylation factor. This Entamoeba histolytica (strain ATCC 30459 / HM-1:IMSS / ABRM) protein is Poly(A) polymerase.